A 318-amino-acid polypeptide reads, in one-letter code: DNA repair nuclease/redox regulator APEX1 (318 aa).

Residues 1-59 (MPKRGKKGAVVEDAEEPKTEPEAKKSKAGAKKNEKEAVGEGAVLYEDPPDQKTSPSGKS) are disordered. The necessary for interaction with YBX1, binding to RNA, association together with NPM1 to rRNA, endoribonuclease activity on abasic RNA and localization in the nucleoli stretch occupies residues 2 to 33 (PKRGKKGAVVEDAEEPKTEPEAKKSKAGAKKN). 2 positions are modified to N6-acetyllysine; by EP300: Lys-6 and Lys-7. Positions 8–13 (GAVVED) match the Nuclear localization signal (NLS) motif. Basic and acidic residues predominate over residues 16 to 38 (EPKTEPEAKKSKAGAKKNEKEAV). Positions 23–33 (AKKSKAGAKKN) are necessary for interaction with NPM1 and for efficient rRNA binding. Lys-27, Lys-31, Lys-32, and Lys-35 each carry N6-acetyllysine. Residue Ser-54 is modified to Phosphoserine. A Nuclear export signal (NES) motif is present at residues 64-80 (ICSWNVDGLRAWIKKKG). At Cys-65 the chain carries S-nitrosocysteine; alternate. Cys-65 and Cys-93 are oxidised to a cystine. Asp-70 is a Mg(2+) binding site. The residue at position 93 (Cys-93) is an S-nitrosocysteine; alternate. Glu-96 lines the Mg(2+) pocket. Tyr-171 is an active-site residue. N6-acetyllysine is present on Lys-197. The Mg(2+) site is built by Asp-210 and Asn-212. Asp-210 (proton donor/acceptor) is an active-site residue. At Thr-233 the chain carries Phosphothreonine; by CDK5. Residues 289-318 (QSVLPALCDSKIRSKALGSDHCPITLYLAL) are mitochondrial targeting sequence (MTS). Position 308 (Asp-308) interacts with Mg(2+). An S-nitrosocysteine modification is found at Cys-310.

It belongs to the DNA repair enzymes AP/ExoA family. As to quaternary structure, monomer. Homodimer; disulfide-linked. Component of the SET complex, composed of at least APEX1, SET, ANP32A, HMGB2, NME1 and TREX1. Associates with the dimer XRCC5/XRCC6 in a DNA-dependent manner. Interacts with SIRT1; the interaction is increased in the context of genotoxic stress. Interacts with HDAC1, HDAC2 and HDAC3; the interactions are not dependent on the APEX1 acetylation status. Interacts with XRCC1; the interaction is induced by SIRT1 and increased with the APEX1 acetylated form. Interacts with NPM1 (via N-terminal domain); the interaction is RNA-dependent and decreases in hydrogen peroxide-damaged cells. Interacts (via N-terminus) with YBX1 (via C-terminus); the interaction is increased in presence of APEX1 acetylated at Lys-6 and Lys-7. Interacts with HNRNPL; the interaction is DNA-dependent. Interacts (via N-terminus) with KPNA1 and KPNA2. Interacts with TXN; the interaction stimulates the FOS/JUN AP-1 complex DNA-binding activity in a redox-dependent manner. Interacts with GZMA, KRT8, MDM2, POLB, PRDX6, PRPF19, RPLP0, TOMM20 and WDR77. Binds to CDK5. It depends on Mg(2+) as a cofactor. Mn(2+) serves as cofactor. Phosphorylated. Phosphorylation by kinase PKC or casein kinase CK2 results in enhanced redox activity that stimulates binding of the FOS/JUN AP-1 complex to its cognate binding site. AP-endodeoxyribonuclease activity is not affected by CK2-mediated phosphorylation. Phosphorylation of Thr-233 by CDK5 in response to MPP(+)/MPTP (1-methyl-4-phenylpyridinium) reduces AP-endodeoxyribonuclease activity resulting in accumulation of DNA damage and contributing to neuronal death. In terms of processing, acetylated on Lys-6 and Lys-7. Acetylation is increased by the transcriptional coactivator EP300 acetyltransferase, genotoxic agents like H(2)O(2) and methyl methanesulfonate (MMS). Acetylation increases its binding affinity to the negative calcium response element (nCaRE) DNA promoter. The acetylated form induces a stronger binding of YBX1 to the Y-box sequence in the MDR1 promoter than the unacetylated form. Deacetylated on lysines. Lys-6 and Lys-7 are deacetylated by SIRT1. Post-translationally, cleaved at Lys-31 by granzyme A to create the mitochondrial form; leading in reduction of binding to DNA, AP endodeoxyribonuclease activity, redox activation of transcription factors and to enhanced cell death. Cleaved by granzyme K; leading to intracellular ROS accumulation and enhanced cell death after oxidative stress. Cys-69 and Cys-93 are nitrosylated in response to nitric oxide (NO) and lead to the exposure of the nuclear export signal (NES). In terms of processing, ubiquitinated by MDM2; leading to translocation to the cytoplasm and proteasomal degradation. In terms of tissue distribution, the mitochondrial form is expressed in liver (at protein level). Thymus.

It is found in the nucleus. It localises to the nucleolus. The protein localises to the nucleus speckle. Its subcellular location is the endoplasmic reticulum. The protein resides in the cytoplasm. It is found in the mitochondrion. It catalyses the reaction Exonucleolytic cleavage in the 3'- to 5'-direction to yield nucleoside 5'-phosphates.. Its activity is regulated as follows. NPM1 stimulates endodeoxyribonuclease activity on double-stranded DNA with AP sites, but inhibits endoribonuclease activity on single-stranded RNA containing AP sites. Its function is as follows. Multifunctional protein that plays a central role in the cellular response to oxidative stress. The two major activities of APEX1 are DNA repair and redox regulation of transcriptional factors. Functions as an apurinic/apyrimidinic (AP) endodeoxyribonuclease in the DNA base excision repair (BER) pathway of DNA lesions induced by oxidative and alkylating agents. Initiates repair of AP sites in DNA by catalyzing hydrolytic incision of the phosphodiester backbone immediately adjacent to the damage, generating a single-strand break with 5'-deoxyribose phosphate and 3'-hydroxyl ends. Also incises at AP sites in the DNA strand of DNA/RNA hybrids, single-stranded DNA regions of R-loop structures, and single-stranded RNA molecules. Has 3'-5' exoribonuclease activity on mismatched deoxyribonucleotides at the 3' termini of nicked or gapped DNA molecules during short-patch BER. Possesses DNA 3' phosphodiesterase activity capable of removing lesions (such as phosphoglycolate) blocking the 3' side of DNA strand breaks. May also play a role in the epigenetic regulation of gene expression by participating in DNA demethylation. Acts as a loading factor for POLB onto non-incised AP sites in DNA and stimulates the 5'-terminal deoxyribose 5'-phosphate (dRp) excision activity of POLB. Plays a role in the protection from granzyme-mediated cellular repair leading to cell death. Also involved in the DNA cleavage step of class switch recombination (CSR). On the other hand, APEX1 also exerts reversible nuclear redox activity to regulate DNA binding affinity and transcriptional activity of transcriptional factors by controlling the redox status of their DNA-binding domain, such as the FOS/JUN AP-1 complex after exposure to IR. Involved in calcium-dependent down-regulation of parathyroid hormone (PTH) expression by binding to negative calcium response elements (nCaREs). Together with HNRNPL or the dimer XRCC5/XRCC6, associates with nCaRE, acting as an activator of transcriptional repression. Stimulates the YBX1-mediated MDR1 promoter activity, when acetylated at Lys-6 and Lys-7, leading to drug resistance. Also acts as an endoribonuclease involved in the control of single-stranded RNA metabolism. Plays a role in regulating MYC mRNA turnover by preferentially cleaving in between UA and CA dinucleotides of the MYC coding region determinant (CRD). In association with NMD1, plays a role in the rRNA quality control process during cell cycle progression. Associates, together with YBX1, on the MDR1 promoter. Together with NPM1, associates with rRNA. Binds DNA and RNA. The sequence is that of DNA repair nuclease/redox regulator APEX1 (APEX1) from Bos taurus (Bovine).